A 332-amino-acid polypeptide reads, in one-letter code: Isopentenyl-diphosphate delta-isomerase (332 aa).

6–7 (RK) lines the substrate pocket. FMN-binding positions include 65-67 (AMT), Ser-95, and Asn-123. Residue 95 to 97 (SGR) participates in substrate binding. Substrate is bound at residue Gln-157. Mg(2+) is bound at residue Glu-158. FMN-binding positions include Lys-187, Thr-217, 264–266 (GVY), Ala-285, and 285–286 (AR).

This sequence belongs to the IPP isomerase type 2 family. In terms of assembly, homooctamer. Dimer of tetramers. The cofactor is FMN. NADPH is required as a cofactor. It depends on Mg(2+) as a cofactor.

The protein resides in the cytoplasm. It catalyses the reaction isopentenyl diphosphate = dimethylallyl diphosphate. Competitively inhibited by N,N-dimethyl-2-amino-1-ethyl diphosphate (NIPP) and isopentyl diphosphate. In terms of biological role, involved in the biosynthesis of isoprenoids. Catalyzes the 1,3-allylic rearrangement of the homoallylic substrate isopentenyl (IPP) to its allylic isomer, dimethylallyl diphosphate (DMAPP). This Thermus thermophilus (strain ATCC BAA-163 / DSM 7039 / HB27) protein is Isopentenyl-diphosphate delta-isomerase.